We begin with the raw amino-acid sequence, 231 residues long: Small ribosomal subunit protein uS5 (231 aa).

Positions 1–63 are disordered; sequence MADLENKTVK…KSVDRANKVK (63 aa). Residues 29–60 are compositionally biased toward basic and acidic residues; that stretch reads KRTESGAKKQIWEKRSAHDSKDMPKKSVDRAN. Residues 75–138 enclose the S5 DRBM domain; it reads FSEKVVNISR…KDARNHLISV (64 aa).

Belongs to the universal ribosomal protein uS5 family. Part of the 30S ribosomal subunit. Contacts proteins S4 and S8.

In terms of biological role, with S4 and S12 plays an important role in translational accuracy. Functionally, located at the back of the 30S subunit body where it stabilizes the conformation of the head with respect to the body. The polypeptide is Small ribosomal subunit protein uS5 (Mycoplasmopsis agalactiae (strain NCTC 10123 / CIP 59.7 / PG2) (Mycoplasma agalactiae)).